A 291-amino-acid chain; its full sequence is Elongation factor Ts (291 aa).

The interval 79–82 (TDFV) is involved in Mg(2+) ion dislocation from EF-Tu.

The protein belongs to the EF-Ts family.

The protein localises to the cytoplasm. In terms of biological role, associates with the EF-Tu.GDP complex and induces the exchange of GDP to GTP. It remains bound to the aminoacyl-tRNA.EF-Tu.GTP complex up to the GTP hydrolysis stage on the ribosome. The polypeptide is Elongation factor Ts (Leuconostoc mesenteroides subsp. mesenteroides (strain ATCC 8293 / DSM 20343 / BCRC 11652 / CCM 1803 / JCM 6124 / NCDO 523 / NBRC 100496 / NCIMB 8023 / NCTC 12954 / NRRL B-1118 / 37Y)).